A 217-amino-acid chain; its full sequence is Ribulose-phosphate 3-epimerase (217 aa).

Ser-7 lines the substrate pocket. Positions 32, 34, and 65 each coordinate a divalent metal cation. Asp-34 functions as the Proton acceptor in the catalytic mechanism. Substrate contacts are provided by residues His-65, 141 to 144, 175 to 177, and 197 to 198; these read GFGG, DGG, and GS. A divalent metal cation is bound at residue Asp-175. Catalysis depends on Asp-175, which acts as the Proton donor.

It belongs to the ribulose-phosphate 3-epimerase family. A divalent metal cation serves as cofactor.

It catalyses the reaction D-ribulose 5-phosphate = D-xylulose 5-phosphate. It participates in carbohydrate degradation. In terms of biological role, catalyzes the reversible epimerization of D-ribulose 5-phosphate to D-xylulose 5-phosphate. The polypeptide is Ribulose-phosphate 3-epimerase (Bacillus subtilis (strain 168)).